The chain runs to 279 residues: MATH domain and coiled-coil domain-containing protein At1g31390 (279 aa).

Residues 6–134 enclose the MATH domain; sequence EKKITWTIKN…NGDVKIVVEV (129 aa). A coiled-coil region spans residues 235 to 271; sequence KLDWLEKKLKEVCEARVQEIDEEWKDLTDLKENWSSD.

This chain is MATH domain and coiled-coil domain-containing protein At1g31390, found in Arabidopsis thaliana (Mouse-ear cress).